Reading from the N-terminus, the 791-residue chain is MKKLTSLFPLLFLIPLLASCAEEKQVYIVYFGEHKGDKAFHEIEEHHHSYLQSVKESEEDARASLLYSYKHSINGFAAELTPDQASKLEKLAEVVSVFKSHPRKYEAHTTRSWEFVGLEEEETDSDVPRRKNDADDRFRVGRNFLKKAKHGDGIIVGVLDSGVWPESKSFNDKGMGPVPKSWKGICQTGVAFNSSHCNRKIIGARYYVKGYERYYGAFNATANKDFLSPRDPDGHGSHTASTAVGRRVLGASALGGFAKGSASGGAPLARLAIYKACWAKPNAEKVEGNICLEEDMLAAIDDAIADGVHVISISIGTTEPFPFTQDGIAMGALHAVKRNIVVAASAGNSGPKPGTLSNLAPWIITVGASTLDRAFVGGLVLGNGYTIKTDSITAFKMDKFAPLVYASNVVVPGIALNETSQCLPNSLKPELVSGKVVLCLRGAGSRIGKGMEVKRAGGAGMILGNIAANGNEVPSDSHFVPTAGVTPTVVDKILEYIKTDKNPKAFIKPGKTVYKYQAAPSMTGFSSRGPNVVDPNILKPDITAPGLYILAAWSGADSPSKMSVDQRVAGYNIYSGTSMSCPHVAGAIALLKAIHPKWSSAAIRSALMTTAWMTNDKKKPIQDTTGLPANPFALGSGHFRPTKAADPGLVYDASYRAYLLYGCSVNITNIDPTFKCPSKIPPGYNHNYPSIAVPNLKKTVTVKRTVTNVGTGNSTSTYLFSVKPPSGISVKAIPNILSFNRIGQKQRFKIVIKPLKNQVMNATEKGQYQFGWFSWTDKVHVVRSPIAVSLA.

The N-terminal stretch at 1–20 (MKKLTSLFPLLFLIPLLASC) is a signal peptide. A propeptide spans 21–108 (AEEKQVYIVY…KSHPRKYEAH (88 aa)) (activation peptide). In terms of domain architecture, Inhibitor I9 spans 26–104 (VYIVYFGEHK…VSVFKSHPRK (79 aa)). In terms of domain architecture, Peptidase S8 spans 134-645 (ADDRFRVGRN…SGHFRPTKAA (512 aa)). Aspartate 160 (charge relay system) is an active-site residue. N-linked (GlcNAc...) asparagine glycosylation is found at asparagine 193 and asparagine 219. Histidine 235 (charge relay system) is an active-site residue. In terms of domain architecture, PA spans 400 to 494 (FAPLVYASNV…VTPTVVDKIL (95 aa)). The N-linked (GlcNAc...) asparagine glycan is linked to asparagine 417. Catalysis depends on serine 578, which acts as the Charge relay system. Asparagine 666, asparagine 713, and asparagine 761 each carry an N-linked (GlcNAc...) asparagine glycan.

This sequence belongs to the peptidase S8 family.

Its subcellular location is the secreted. The polypeptide is Subtilisin-like protease SBT5.6 (Arabidopsis thaliana (Mouse-ear cress)).